The chain runs to 394 residues: Elongation factor Tu (394 aa).

The tr-type G domain occupies 10–204; sequence KPHVNVGTIG…ALDSYIPEPE (195 aa). The G1 stretch occupies residues 19 to 26; sequence GHVDHGKT. 19-26 is a GTP binding site; that stretch reads GHVDHGKT. Thr-26 lines the Mg(2+) pocket. The interval 60–64 is G2; sequence GITIS. The tract at residues 81-84 is G3; it reads DCPG. Residues 81–85 and 136–139 each bind GTP; these read DCPGH and NKCD. The interval 136–139 is G4; the sequence is NKCD. The G5 stretch occupies residues 174–176; it reads SAL.

This sequence belongs to the TRAFAC class translation factor GTPase superfamily. Classic translation factor GTPase family. EF-Tu/EF-1A subfamily. As to quaternary structure, monomer.

The protein resides in the cytoplasm. The catalysed reaction is GTP + H2O = GDP + phosphate + H(+). Functionally, GTP hydrolase that promotes the GTP-dependent binding of aminoacyl-tRNA to the A-site of ribosomes during protein biosynthesis. The polypeptide is Elongation factor Tu (Pseudoalteromonas atlantica (strain T6c / ATCC BAA-1087)).